Reading from the N-terminus, the 189-residue chain is Guanylate kinase (189 aa).

A Guanylate kinase-like domain is found at 8–186 (GKLTVITGPS…AVIELESLMG (179 aa)). 15–22 (GPSGVGKG) contacts ATP.

Belongs to the guanylate kinase family.

The protein localises to the cytoplasm. The enzyme catalyses GMP + ATP = GDP + ADP. In terms of biological role, essential for recycling GMP and indirectly, cGMP. The protein is Guanylate kinase of Prochlorococcus marinus (strain MIT 9313).